A 387-amino-acid polypeptide reads, in one-letter code: Protein mab-21-like 3 (387 aa).

It belongs to the mab-21 family.

In Danio rerio (Zebrafish), this protein is Protein mab-21-like 3 (mab21L3).